Consider the following 598-residue polypeptide: Probable translation initiation factor IF-2 (598 aa).

The 223-residue stretch at 3 to 225 (LRCPIVSVLG…GLAQKFLEQK (223 aa)) folds into the tr-type G domain. The G1 stretch occupies residues 12–19 (GHVDHGKT). 12 to 19 (GHVDHGKT) contacts GTP. A G2 region spans residues 37-41 (GITQH). A G3 region spans residues 76–79 (DTPG). GTP contacts are provided by residues 76 to 80 (DTPGH) and 130 to 133 (NKVD). Residues 130-133 (NKVD) form a G4 region. Residues 200–202 (SAM) form a G5 region.

This sequence belongs to the TRAFAC class translation factor GTPase superfamily. Classic translation factor GTPase family. IF-2 subfamily.

In terms of biological role, function in general translation initiation by promoting the binding of the formylmethionine-tRNA to ribosomes. Seems to function along with eIF-2. The sequence is that of Probable translation initiation factor IF-2 from Methanococcus maripaludis (strain C5 / ATCC BAA-1333).